Here is a 259-residue protein sequence, read N- to C-terminus: Protein-tyrosine phosphatase RolB (259 aa).

The interval 219 to 259 (GISRPAASSPEPDLTLRLSGPDQEGEEGVMKPAAVNLKKEA) is disordered.

It catalyses the reaction O-phospho-L-tyrosyl-[protein] + H2O = L-tyrosyl-[protein] + phosphate. Induces differentiation and growth of neoplastic roots (hairy roots). Seems to function as a tyrosine phosphatase. The chain is Protein-tyrosine phosphatase RolB (rolB) from Rhizobium rhizogenes (Agrobacterium rhizogenes).